Consider the following 389-residue polypeptide: Stilbene synthase 3 (389 aa).

A substrate-binding site is contributed by 55-58; it reads KFQR. Residue C164 is part of the active site. Residues L267 and 305 to 307 each bind substrate; that span reads GGR.

It belongs to the thiolase-like superfamily. Chalcone/stilbene synthases family. Homodimer.

Its subcellular location is the cytoplasm. It carries out the reaction 4-coumaroyl-CoA + 3 malonyl-CoA + 3 H(+) = trans-resveratrol + 4 CO2 + 4 CoA. Its pathway is phytoalexin biosynthesis; 3,4',5-trihydroxystilbene biosynthesis; 3,4',5-trihydroxystilbene from trans-4-coumarate: step 2/2. In Arachis hypogaea (Peanut), this protein is Stilbene synthase 3.